Consider the following 145-residue polypeptide: MLTAEEKAAVTAFWGKVKVDEVGGEALGRLLVVYPWTQRFFESFGDLSTADAVMNNPKVKAHGKKVLDSFSNGMKHLDDLKGTFAALSELHCDKLHVDPENFKLLGNVLVVVLARHFGKEFTPELQADYQKVVTGVANALAHRYH.

Residues 1-145 (MLTAEEKAAV…VANALAHRYH (145 aa)) form the Globin domain. A Phosphothreonine modification is found at Thr-11. Ser-43 is modified (phosphoserine). The residue at position 58 (Lys-58) is an N6-acetyllysine. His-62 contributes to the heme b binding site. At Lys-81 the chain carries N6-acetyllysine. Position 91 (His-91) interacts with heme b. Residue Cys-92 is modified to S-nitrosocysteine.

This sequence belongs to the globin family. In terms of assembly, heterotetramer of two alpha chains and two beta chains. Red blood cells.

Functionally, involved in oxygen transport from the lung to the various peripheral tissues. This is Hemoglobin subunit beta (HBB) from Tragelaphus strepsiceros (Greater kudu).